We begin with the raw amino-acid sequence, 449 residues long: XK-related protein 2 (449 aa).

A run of 10 helical transmembrane segments spans residues 35-55 (FSIL…LYMV), 68-88 (TYTF…LIFV), 98-118 (LSLF…EAMI), 174-194 (IQAF…SLIS), 202-222 (VVLM…CNML), 241-261 (LCIT…LVLF), 269-289 (AVPF…IKFW), 306-326 (VGTL…NFSC), 357-377 (LVEN…VLLN), and 382-402 (LIAL…LLFF).

The protein belongs to the XK family. As to expression, expressed predominantly in the placenta, in syncytiotrophoblasts. Moderate levels in the adrenal gland, low levels in the trachea and very low levels in the bone marrow.

It localises to the cell membrane. This Homo sapiens (Human) protein is XK-related protein 2 (XKRX).